A 364-amino-acid polypeptide reads, in one-letter code: DNA replication and repair protein RecF (364 aa).

Glycine 30 to threonine 37 is a binding site for ATP.

It belongs to the RecF family.

It is found in the cytoplasm. The RecF protein is involved in DNA metabolism; it is required for DNA replication and normal SOS inducibility. RecF binds preferentially to single-stranded, linear DNA. It also seems to bind ATP. This is DNA replication and repair protein RecF from Stenotrophomonas maltophilia (strain K279a).